The chain runs to 528 residues: Chaperonin GroEL, chloroplastic (528 aa).

ATP contacts are provided by residues 29–32 (TLGP), 86–90 (DGTTT), Gly414, and Asp496.

The protein belongs to the chaperonin (HSP60) family. In terms of assembly, forms a cylinder of 14 subunits composed of two heptameric rings stacked back-to-back. Interacts with the co-chaperonin GroES.

The protein localises to the plastid. It is found in the chloroplast. It carries out the reaction ATP + H2O + a folded polypeptide = ADP + phosphate + an unfolded polypeptide.. Functionally, together with its co-chaperonin GroES, plays an essential role in assisting protein folding. The GroEL-GroES system forms a nano-cage that allows encapsulation of the non-native substrate proteins and provides a physical environment optimized to promote and accelerate protein folding. The chain is Chaperonin GroEL, chloroplastic from Porphyra purpurea (Red seaweed).